A 1438-amino-acid polypeptide reads, in one-letter code: DNA polymerase III PolC-type (1438 aa).

In terms of domain architecture, Exonuclease spans 422–578 (YVVFDVETTG…YDTESTAYIF (157 aa)).

Belongs to the DNA polymerase type-C family. PolC subfamily.

It is found in the cytoplasm. It carries out the reaction DNA(n) + a 2'-deoxyribonucleoside 5'-triphosphate = DNA(n+1) + diphosphate. Its function is as follows. Required for replicative DNA synthesis. This DNA polymerase also exhibits 3' to 5' exonuclease activity. This is DNA polymerase III PolC-type from Staphylococcus haemolyticus (strain JCSC1435).